A 371-amino-acid polypeptide reads, in one-letter code: Probable protein phosphatase 2C 11 (371 aa).

A helical membrane pass occupies residues 29-49 (FFFFLFNSQTISSFIIFYLFL). Residues 67–95 (PPLSVAPLRGDANSPPPESSSSPATKSSL) are disordered. The span at 85 to 94 (SSSSPATKSS) shows a compositional bias: low complexity. In terms of domain architecture, PPM-type phosphatase spans 123–368 (SYGYSSLKGK…DNITCIVVRF (246 aa)). Residues aspartate 159, glycine 160, aspartate 320, and aspartate 359 each coordinate Mn(2+).

The protein belongs to the PP2C family. It depends on Mg(2+) as a cofactor. Mn(2+) is required as a cofactor.

The protein resides in the membrane. The catalysed reaction is O-phospho-L-seryl-[protein] + H2O = L-seryl-[protein] + phosphate. The enzyme catalyses O-phospho-L-threonyl-[protein] + H2O = L-threonyl-[protein] + phosphate. The chain is Probable protein phosphatase 2C 11 from Arabidopsis thaliana (Mouse-ear cress).